The following is an 83-amino-acid chain: MPYSRDITKFITATEPEVGLPLLALQHSKSIIGVILLVICLLFILIGIIILAVGGHATAGSIFVVLSLILGGGGFFLIYKDNS.

2 helical membrane passes run 31-51 (IIGVILLVICLLFILIGIIIL) and 59-79 (AGSIFVVLSLILGGGGFFLIY).

This sequence belongs to the asfivirus EP84R family.

It localises to the virion membrane. This chain is Transmembrane protein EP84R, found in Ornithodoros (relapsing fever ticks).